We begin with the raw amino-acid sequence, 26 residues long: Fumarylacetoacetate hydrolase domain-containing protein 2A (26 aa).

The protein belongs to the FAH family. Ca(2+) is required as a cofactor. Mg(2+) serves as cofactor.

Its function is as follows. May have hydrolase activity. This is Fumarylacetoacetate hydrolase domain-containing protein 2A from Mesocricetus auratus (Golden hamster).